The sequence spans 37 residues: Lambda-hexatoxin-Hv1c (37 aa).

4 disulfide bridges follow: C3-C17, C10-C22, C13-C14, and C16-C32.

It belongs to the neurotoxin 11 (kappa toxin) family. In terms of tissue distribution, expressed by the venom gland.

It localises to the secreted. Its function is as follows. This excitatory toxin inhibits insect calcium-activated potassium (KCa) channels (Slo-type). Pan-neuronal expression in Drosophila is lethal but flies engineered to express the toxin only in clock neurons have defects in circadian rhythm but a normal lifespan. The polypeptide is Lambda-hexatoxin-Hv1c (Hadronyche versuta (Blue mountains funnel-web spider)).